The sequence spans 475 residues: Ankyrin repeat, SAM and basic leucine zipper domain-containing protein 1 (475 aa).

The span at 1 to 10 shows a compositional bias: low complexity; the sequence is MAAGRLRGLA. The disordered stretch occupies residues 1–24; it reads MAAGRLRGLAVAGGGESSESDDDG. Residues Ser17, Ser18, and Ser20 each carry the phosphoserine modification. ANK repeat units follow at residues 45 to 74, 78 to 107, 110 to 144, 148 to 177, 181 to 210, and 214 to 243; these read EKNE…SVDS, YGWT…NANF, DKQT…DPNV, RLMT…EVNT, SGYT…DKML, and DGNI…PLKG. One can recognise an SAM domain in the interval 272 to 334; sequence SYTAFGDLEV…KILAALKELD (63 aa).

In terms of assembly, interacts with DDX4, PIWIL1, RANBP9 and TDRD1.

Its subcellular location is the cytoplasm. In terms of biological role, plays a central role during spermatogenesis by repressing transposable elements and preventing their mobilization, which is essential for the germline integrity. Acts via the piRNA metabolic process, which mediates the repression of transposable elements during meiosis by forming complexes composed of piRNAs and Piwi proteins and governs the methylation and subsequent repression of transposons. Its association with pi-bodies suggests a participation in the primary piRNAs metabolic process. Required prior to the pachytene stage to facilitate the production of multiple types of piRNAs, including those associated with repeats involved in the regulation of retrotransposons. May act by mediating protein-protein interactions during germ cell maturation. The sequence is that of Ankyrin repeat, SAM and basic leucine zipper domain-containing protein 1 (ASZ1) from Carollia perspicillata (Seba's short-tailed bat).